The primary structure comprises 70 residues: Cold shock-like protein CspB (70 aa).

Residues 7 to 67 enclose the CSD domain; sequence GLVKWFDAGK…GQKGPSAVNV (61 aa).

It is found in the cytoplasm. The polypeptide is Cold shock-like protein CspB (cspB) (Yersinia enterocolitica).